Reading from the N-terminus, the 370-residue chain is Dual-specificity RNA methyltransferase RlmN (370 aa).

Glu-97 serves as the catalytic Proton acceptor. A Radical SAM core domain is found at 103-340; that stretch reads EKSRGTLCIS…CTVRRTRGDD (238 aa). Residues Cys-110 and Cys-345 are joined by a disulfide bond. Residues Cys-117, Cys-121, and Cys-124 each contribute to the [4Fe-4S] cluster site. S-adenosyl-L-methionine-binding positions include 170 to 171, Ser-202, 224 to 226, and Asn-302; these read GE and SLH. The active-site S-methylcysteine intermediate is Cys-345.

It belongs to the radical SAM superfamily. RlmN family. [4Fe-4S] cluster is required as a cofactor.

The protein resides in the cytoplasm. The enzyme catalyses adenosine(2503) in 23S rRNA + 2 reduced [2Fe-2S]-[ferredoxin] + 2 S-adenosyl-L-methionine = 2-methyladenosine(2503) in 23S rRNA + 5'-deoxyadenosine + L-methionine + 2 oxidized [2Fe-2S]-[ferredoxin] + S-adenosyl-L-homocysteine. It catalyses the reaction adenosine(37) in tRNA + 2 reduced [2Fe-2S]-[ferredoxin] + 2 S-adenosyl-L-methionine = 2-methyladenosine(37) in tRNA + 5'-deoxyadenosine + L-methionine + 2 oxidized [2Fe-2S]-[ferredoxin] + S-adenosyl-L-homocysteine. Specifically methylates position 2 of adenine 2503 in 23S rRNA and position 2 of adenine 37 in tRNAs. m2A2503 modification seems to play a crucial role in the proofreading step occurring at the peptidyl transferase center and thus would serve to optimize ribosomal fidelity. This Hydrogenovibrio crunogenus (strain DSM 25203 / XCL-2) (Thiomicrospira crunogena) protein is Dual-specificity RNA methyltransferase RlmN.